The primary structure comprises 136 residues: Large ribosomal subunit protein uL16 (136 aa).

It belongs to the universal ribosomal protein uL16 family. As to quaternary structure, part of the 50S ribosomal subunit.

Its function is as follows. Binds 23S rRNA and is also seen to make contacts with the A and possibly P site tRNAs. This is Large ribosomal subunit protein uL16 from Buchnera aphidicola subsp. Acyrthosiphon pisum (strain 5A).